Consider the following 320-residue polypeptide: 1,5-anhydro-D-fructose reductase (320 aa).

Aspartate 35 provides a ligand contact to NADP(+). The active-site Proton donor is tyrosine 40. Histidine 102 contacts substrate. NADP(+) contacts are provided by residues glutamine 194 and 265-277; that span reads IPGSITPSHIKEN.

It belongs to the aldo/keto reductase family. Monomer. As to expression, specifically expressed in testis. Expressed in testicular germ cells and testis interstitial cells.

It localises to the cytoplasm. The enzyme catalyses 1,5-anhydro-D-glucitol + NADP(+) = 1,5-anhydro-D-fructose + NADPH + H(+). With respect to regulation, inhibited by p-chloromercuribenzoic acid and alkyliodines. In terms of biological role, catalyzes the NADPH-dependent reduction of 1,5-anhydro-D-fructose (AF) to 1,5-anhydro-D-glucitol. Has low NADPH-dependent reductase activity towards 9,10-phenanthrenequinone (in vitro). This Homo sapiens (Human) protein is 1,5-anhydro-D-fructose reductase (AKR1E2).